A 749-amino-acid polypeptide reads, in one-letter code: Phosphate-regulating neutral endopeptidase PHEX (749 aa).

Topologically, residues 1–20 (MEAETGSTMETGKGTNRGIR) are cytoplasmic. The helical; Signal-anchor for type II membrane protein transmembrane segment at 21-37 (IALALFIGGTLVLGTLL) threads the bilayer. Residues 38–749 (FLVSQGLLSF…NRGADSCRLW (712 aa)) are Extracellular-facing. Positions 53 to 749 (YCLKPECIEA…NRGADSCRLW (697 aa)) constitute a Peptidase M13 domain. The cysteines at positions 54 and 59 are disulfide-linked. Asn71, Asn238, Asn263, Asn290, Asn301, Asn377, and Asn484 each carry an N-linked (GlcNAc...) asparagine glycan. 4 disulfides stabilise this stretch: Cys77–Cys733, Cys85–Cys693, Cys142–Cys406, and Cys617–Cys746. A Zn(2+)-binding site is contributed by His580. The active site involves Glu581. Residues His584 and Glu642 each coordinate Zn(2+). The Proton donor role is filled by Asp646. An N-linked (GlcNAc...) asparagine glycan is attached at Asn736.

It belongs to the peptidase M13 family. In terms of assembly, interacts with MEPE; the interaction is zinc-dependent (via ASARM motif). The cofactor is Zn(2+). N-glycosylated. As to expression, expressed in bone, specifically in the osteoid and in osteocytes. Expressed in teeth, specifically in odontoblasts and ameloblasts. Expressed moderately by macrophages in the liver and has minimal expression in brown adipose tissue. Also expressed in suprabasal layers of the skin.

Its subcellular location is the cell membrane. In terms of biological role, peptidase that cleaves SIBLING (small integrin-binding ligand, N-linked glycoprotein)-derived ASARM peptides, thus regulating their biological activity. Cleaves ASARM peptides between Ser and Glu or Asp residues. Regulates osteogenic cell differentiation and bone mineralization through the cleavage of the MEPE-derived ASARM peptide. Promotes dentin mineralization and renal phosphate reabsorption by cleaving DMP1- and MEPE-derived ASARM peptides. Inhibits the cleavage of MEPE by CTSB/cathepsin B thus preventing MEPE degradation. The sequence is that of Phosphate-regulating neutral endopeptidase PHEX (Phex) from Mus musculus (Mouse).